Reading from the N-terminus, the 632-residue chain is tRNA uridine 5-carboxymethylaminomethyl modification enzyme MnmG (632 aa).

15-20 lines the FAD pocket; sequence GAGHAG. Residues 205 to 231 form a disordered region; that stretch reads PRVDGNTIDYSKTQEEPGDKEPRHFSY. The span at 216 to 228 shows a compositional bias: basic and acidic residues; the sequence is KTQEEPGDKEPRH. An NAD(+)-binding site is contributed by 276–290; sequence GPRYCPSIEDKVVRF.

Belongs to the MnmG family. Homodimer. Heterotetramer of two MnmE and two MnmG subunits. FAD is required as a cofactor.

The protein localises to the cytoplasm. In terms of biological role, NAD-binding protein involved in the addition of a carboxymethylaminomethyl (cmnm) group at the wobble position (U34) of certain tRNAs, forming tRNA-cmnm(5)s(2)U34. This chain is tRNA uridine 5-carboxymethylaminomethyl modification enzyme MnmG, found in Lactobacillus johnsonii (strain CNCM I-12250 / La1 / NCC 533).